The sequence spans 225 residues: UPF0173 metal-dependent hydrolase Fjoh_2786 (225 aa).

This sequence belongs to the UPF0173 family.

The sequence is that of UPF0173 metal-dependent hydrolase Fjoh_2786 from Flavobacterium johnsoniae (strain ATCC 17061 / DSM 2064 / JCM 8514 / BCRC 14874 / CCUG 350202 / NBRC 14942 / NCIMB 11054 / UW101) (Cytophaga johnsonae).